Consider the following 316-residue polypeptide: Methionyl-tRNA formyltransferase (316 aa).

Serine 113–proline 116 contacts (6S)-5,6,7,8-tetrahydrofolate.

Belongs to the Fmt family.

The catalysed reaction is L-methionyl-tRNA(fMet) + (6R)-10-formyltetrahydrofolate = N-formyl-L-methionyl-tRNA(fMet) + (6S)-5,6,7,8-tetrahydrofolate + H(+). Functionally, attaches a formyl group to the free amino group of methionyl-tRNA(fMet). The formyl group appears to play a dual role in the initiator identity of N-formylmethionyl-tRNA by promoting its recognition by IF2 and preventing the misappropriation of this tRNA by the elongation apparatus. This Proteus mirabilis (strain HI4320) protein is Methionyl-tRNA formyltransferase.